The chain runs to 206 residues: MELTKIFLAFLCIGVSYSLGSFPSGFIAGKWLKGIDLRKVGSGSTGATNVLRHVGKKAALIVFLIDVSKGIGSILIAKSLFLSPSFHVICGIAALSGHIWPIWLNWKGGKAVATGLGVFLGISWQVGLASLGIFMAVLSSSKIVSLSSISAAISLPILMFLSLQEASFLNAYIIASFAAMIMVLWRHRANLKRLLNGDEPRIGKIN.

Transmembrane regions (helical) follow at residues 6–26 (IFLA…PSGF), 57–77 (KAAL…ILIA), 86–106 (FHVI…WLNW), 118–138 (VFLG…MAVL), 143–163 (IVSL…FLSL), and 165–185 (EASF…MVLW).

The protein belongs to the PlsY family. As to quaternary structure, probably interacts with PlsX.

The protein localises to the cell inner membrane. The enzyme catalyses an acyl phosphate + sn-glycerol 3-phosphate = a 1-acyl-sn-glycero-3-phosphate + phosphate. The protein operates within lipid metabolism; phospholipid metabolism. Functionally, catalyzes the transfer of an acyl group from acyl-phosphate (acyl-PO(4)) to glycerol-3-phosphate (G3P) to form lysophosphatidic acid (LPA). This enzyme utilizes acyl-phosphate as fatty acyl donor, but not acyl-CoA or acyl-ACP. This is Glycerol-3-phosphate acyltransferase from Prochlorococcus marinus (strain MIT 9211).